The chain runs to 428 residues: Adenylosuccinate synthetase (428 aa).

GTP contacts are provided by residues 12-18 (GDEGKGK) and 40-42 (GHT). The active-site Proton acceptor is the Asp13. The Mg(2+) site is built by Asp13 and Gly40. Residues 13–16 (DEGK), 38–41 (NAGH), Thr128, Arg142, Gln223, Thr238, and Arg302 contribute to the IMP site. His41 (proton donor) is an active-site residue. 298–304 (VTTGRPR) is a substrate binding site. GTP-binding positions include Arg304, 330-332 (KLD), and 412-414 (GVG).

The protein belongs to the adenylosuccinate synthetase family. Homodimer. Requires Mg(2+) as cofactor.

It localises to the cytoplasm. The catalysed reaction is IMP + L-aspartate + GTP = N(6)-(1,2-dicarboxyethyl)-AMP + GDP + phosphate + 2 H(+). The protein operates within purine metabolism; AMP biosynthesis via de novo pathway; AMP from IMP: step 1/2. In terms of biological role, plays an important role in the de novo pathway of purine nucleotide biosynthesis. Catalyzes the first committed step in the biosynthesis of AMP from IMP. In Halothermothrix orenii (strain H 168 / OCM 544 / DSM 9562), this protein is Adenylosuccinate synthetase.